A 116-amino-acid polypeptide reads, in one-letter code: Beta-2-microglobulin (116 aa).

Positions 1 to 19 (MRAIITFALFCVLYVTVQG) are cleaved as a signal peptide. In terms of domain architecture, Ig-like C1-type spans 24–110 (PKVQVYSHFP…VRHMNNKNIY (87 aa)). A disulfide bridge connects residues Cys44 and Cys99.

This sequence belongs to the beta-2-microglobulin family. Heterodimer of an alpha chain and a beta chain. Beta-2-microglobulin is the beta-chain of major histocompatibility complex class I molecules.

The protein localises to the secreted. Component of the class I major histocompatibility complex (MHC). Involved in the presentation of peptide antigens to the immune system. In Cyprinus carpio (Common carp), this protein is Beta-2-microglobulin (b2m).